The sequence spans 364 residues: NADH-quinone oxidoreductase subunit H (364 aa).

8 helical membrane passes run 21–41 (AGQI…LLLA), 88–108 (VFLL…AVIP), 120–140 (VGIL…IMGG), 159–179 (MVSY…LAGS), 208–228 (LPLL…GLAE), 267–287 (IVLI…APFP), 301–321 (FYYF…VSMA), and 340–360 (VFLP…VFGP).

It belongs to the complex I subunit 1 family. NDH-1 is composed of 14 different subunits. Subunits NuoA, H, J, K, L, M, N constitute the membrane sector of the complex.

The protein localises to the cell inner membrane. It carries out the reaction a quinone + NADH + 5 H(+)(in) = a quinol + NAD(+) + 4 H(+)(out). NDH-1 shuttles electrons from NADH, via FMN and iron-sulfur (Fe-S) centers, to quinones in the respiratory chain. The immediate electron acceptor for the enzyme in this species is believed to be ubiquinone. Couples the redox reaction to proton translocation (for every two electrons transferred, four hydrogen ions are translocated across the cytoplasmic membrane), and thus conserves the redox energy in a proton gradient. This subunit may bind ubiquinone. The protein is NADH-quinone oxidoreductase subunit H of Phenylobacterium zucineum (strain HLK1).